A 206-amino-acid chain; its full sequence is Ribosomal RNA small subunit methyltransferase G (206 aa).

Residues glycine 71, phenylalanine 76, 125 to 126, and arginine 139 each bind S-adenosyl-L-methionine; that span reads IE.

The protein belongs to the methyltransferase superfamily. RNA methyltransferase RsmG family.

It is found in the cytoplasm. The enzyme catalyses guanosine(527) in 16S rRNA + S-adenosyl-L-methionine = N(7)-methylguanosine(527) in 16S rRNA + S-adenosyl-L-homocysteine. In terms of biological role, specifically methylates the N7 position of guanine in position 527 of 16S rRNA. The sequence is that of Ribosomal RNA small subunit methyltransferase G from Cereibacter sphaeroides (strain ATCC 17029 / ATH 2.4.9) (Rhodobacter sphaeroides).